The chain runs to 33 residues: U1-pseudomyrmecitoxin-Pt1 subunit LS2 (33 aa).

Belongs to the myrmexin family. Heterodimer composed of subunit LS2 and subunit SS1, heterodimer composed of subunit LS2 and SS2, and heterodimer composed of subunit LS2 and SS3; disulfide-linked. As to expression, expressed by the venom gland.

It localises to the secreted. In terms of biological role, this heterodimer may have anti-inflammatory properties, since the myrmexin complex (composed of 6 SS-LS heterodimers) inhibits carrageenin-induced edema in a dose-dependent manner (after subcutaneous injection into rats). This chain is U1-pseudomyrmecitoxin-Pt1 subunit LS2, found in Pseudomyrmex triplarinus (Ant).